Here is a 246-residue protein sequence, read N- to C-terminus: Orotidine 5'-phosphate decarboxylase (246 aa).

Substrate contacts are provided by residues Asp-18, Lys-39, 66–75 (DLKFHDIPAT), Thr-130, Arg-192, Gln-201, Gly-221, and Arg-222. Lys-68 acts as the Proton donor in catalysis.

This sequence belongs to the OMP decarboxylase family. Type 1 subfamily. As to quaternary structure, homodimer.

The catalysed reaction is orotidine 5'-phosphate + H(+) = UMP + CO2. The protein operates within pyrimidine metabolism; UMP biosynthesis via de novo pathway; UMP from orotate: step 2/2. Its function is as follows. Catalyzes the decarboxylation of orotidine 5'-monophosphate (OMP) to uridine 5'-monophosphate (UMP). The polypeptide is Orotidine 5'-phosphate decarboxylase (Parasynechococcus marenigrum (strain WH8102)).